We begin with the raw amino-acid sequence, 277 residues long: Putative thiosulfate sulfurtransferase (277 aa).

2 Rhodanese domains span residues 18–125 (HAPK…PLSS) and 154–274 (AINV…APIE). Cys233 acts as the Cysteine persulfide intermediate in catalysis. Residue Arg238 participates in substrate binding.

The catalysed reaction is thiosulfate + hydrogen cyanide = thiocyanate + sulfite + 2 H(+). May be a sulfotransferase involved in the formation of thiosulfate. The sequence is that of Putative thiosulfate sulfurtransferase (cysA1) from Mycobacterium tuberculosis (strain CDC 1551 / Oshkosh).